The following is a 1245-amino-acid chain: MATLQFVLGSASFDHQQVMLDRLAAQYQQAPNDTYLYLVPNHVKFTTEVAVLKGLKKRLKQTGNYAQANVAVLSFSRLGWFLCKDDPDYQKPRLSNVGMAMVVAKIIRELKAESPDLLKMFRGESERQGFATEVTKQLVELQNANIQPADLAPDQETGIIKRALASQAGGGRASQSTVFTDKMTVLYEIYRRFEAAVTTHVTAPDRSAMLLNHLEAADLSTTHVYLDRFAGEFSAQEQLIVDALIQRAADTTVSLILDRDYRGRELPSQNNLYYRSAKQYQDLLNLATQQVGVDVLDPIVLNQPNQRRVSDALVGVEEWMEADARFALPDRLPAPTDQVGFFTAPTRVAELNRVATKIRQLVATGQYRYRDFLVVTRHLDGYQTMLEPIFSRHQIPVFNDNQRPMATSPLATFTAALFKVLKDYYQEADVMELLKTGLLVPETPEELQQEGRAKRNPNTFMTAVYRTENYCLKFGKGGRSWFDERPWRLEGEQPESDALKRQNAQINWVKNYIKDELAPALADLQTATTGRELATKFYQFLLDQGVRHQLYSWAHQAQESGQLTQLRDVQQIWQTFGTLLDEYVTILGDQVAPTEQPGQLVAEFADLMNAGFNAGRYAQIPSTLDQVLVSESGMIQDNQRKVLFIMGATDDVMPEVKASEGLLSDPDRELLKRGLNDDQFLPISGTDQINNEPFLNYLSMLSVTERLYMSAPLMSSDDSELTLSPYLKGLARHFNQWDDQNNAPTTDLPDRPNPRASEDDVWSFVAAPAVTMGNLIEVERLSKDTGRKLTSAWRDVARALTRYDEGLTGRLNDIRDGQYAKNEAVPLQPELAARLYTTNRQGQVTNQLTASISQLEKFYQNPYDYFLRYGLHLKKRDELEVSSDKSGTLNHDALAFFVQSVIDEPDLQLADLVKEEHQGRQAELIDQAFEQAMNQQEELRELAANNSRVNLQLQVAKQLITTMAKTLCLQATQTDAQPVAVEKAFGQADWTGESQAAELPALTFDLTGAGLGEGAKVSLRGRIDRLDELKLGEQTYQLVVDYKSYNKAFDLVDAYAGQALQMLAYLNALQAANPGKQLLGSLYLRLYVPTVDAGKEGTAEELKEHLYQGITINDDAVLAALDHGLGEKGATLLSIKKKSKKDTSRFKVSADDQFSAKAGSNLVSPTDLKRLMDHNAELIKEAAVQILQGQNEIRPYRRQVGTTAETGLAFSDFLDVSRFDQALDDYKEIELTDADVEAKFEQEEE.

The tract at residues 737 to 758 (WDDQNNAPTTDLPDRPNPRASE) is disordered. The segment covering 748–758 (LPDRPNPRASE) has biased composition (basic and acidic residues).

It belongs to the helicase family. AddB/RexB type 2 subfamily. Heterodimer of AddA and RexB. The cofactor is Mg(2+).

Functionally, the heterodimer acts as both an ATP-dependent DNA helicase and an ATP-dependent, dual-direction single-stranded exonuclease. Recognizes the chi site generating a DNA molecule suitable for the initiation of homologous recombination. This subunit has 5' -&gt; 3' nuclease activity but not helicase activity. This chain is ATP-dependent helicase/deoxyribonuclease subunit B, found in Limosilactobacillus fermentum (strain NBRC 3956 / LMG 18251) (Lactobacillus fermentum).